A 97-amino-acid polypeptide reads, in one-letter code: uncharacterized protein (97 aa).

Positions 2-95 constitute a Stress-response A/B barrel domain; the sequence is IRHLVLFKLN…EFATWVIADY (94 aa).

This is an uncharacterized protein from Streptomyces coelicolor (strain ATCC BAA-471 / A3(2) / M145).